A 466-amino-acid polypeptide reads, in one-letter code: MITLYNTLTRQKEVFKPIEPGKVKMYVCGPTVYNYIHIGNARPAINYDVVRRYFEYQGYNVEYVSNFTDVDDKLIKRSQELNQTVPEIAEKYIAAFHEDVGALNVRKATSNPRVMDHMDDIIQFIKDLVDQGYAYESGGDVYFRTRKFEGYGKLSHQSIDDLKVGARIDAGEHKEDALDFTLWKKAKPGEISWDSPFGEGRPGWHIECSVMAFHELGPTIDIHAGGSDLQFPHHENEIAQSEAHNHAPFSNYWMHNGFINIDNEKMSKSLGNFILVHDIIKEVDPDVLRFFMISVHYRSPINYNLELVESARSGLERIRNSYQLIEERAQIATNIENQQTYIDQIDAILNRFETVMNDDFNTANAITAWYDLAKLANKYVLENTTSTEVIDKFKAVYQIFSDVLGVPLKSKNADELLDEDVEKLIEERNEARKNKDFARADEIRDMLKSQNIILEDTPQGVRFKRG.

A Zn(2+)-binding site is contributed by Cys28. A 'HIGH' region motif is present at residues 30 to 40; sequence PTVYNYIHIGN. Zn(2+) contacts are provided by Cys208, His233, and Glu237. A 'KMSKS' region motif is present at residues 265 to 269; the sequence is KMSKS. Lys268 is a binding site for ATP.

It belongs to the class-I aminoacyl-tRNA synthetase family. As to quaternary structure, monomer. Zn(2+) is required as a cofactor.

Its subcellular location is the cytoplasm. The enzyme catalyses tRNA(Cys) + L-cysteine + ATP = L-cysteinyl-tRNA(Cys) + AMP + diphosphate. The chain is Cysteine--tRNA ligase from Staphylococcus aureus (strain bovine RF122 / ET3-1).